We begin with the raw amino-acid sequence, 492 residues long: Probable cytochrome P450 313a3 (492 aa).

Heme is bound at residue cysteine 438.

Belongs to the cytochrome P450 family. It depends on heme as a cofactor.

The protein localises to the endoplasmic reticulum membrane. It is found in the microsome membrane. May be involved in the metabolism of insect hormones and in the breakdown of synthetic insecticides. This Drosophila melanogaster (Fruit fly) protein is Probable cytochrome P450 313a3 (Cyp313a3).